Here is a 175-residue protein sequence, read N- to C-terminus: Large ribosomal subunit protein uL10 (175 aa).

The protein belongs to the universal ribosomal protein uL10 family. Part of the ribosomal stalk of the 50S ribosomal subunit. The N-terminus interacts with L11 and the large rRNA to form the base of the stalk. The C-terminus forms an elongated spine to which L12 dimers bind in a sequential fashion forming a multimeric L10(L12)X complex.

Forms part of the ribosomal stalk, playing a central role in the interaction of the ribosome with GTP-bound translation factors. The chain is Large ribosomal subunit protein uL10 from Delftia acidovorans (strain DSM 14801 / SPH-1).